The following is a 359-amino-acid chain: Elongation factor Ts 1, mitochondrial (359 aa).

Over residues 323-341 (GKAAPAPKAEEPAAVAPAK) the composition is skewed to low complexity. Residues 323-345 (GKAAPAPKAEEPAAVAPAKADAE) are disordered.

Belongs to the EF-Ts family.

Its subcellular location is the mitochondrion. Its function is as follows. Associates with the EF-Tu.GDP complex and induces the exchange of GDP to GTP. It remains bound to the aminoacyl-tRNA.EF-Tu.GTP complex up to the GTP hydrolysis stage on the ribosome. The protein is Elongation factor Ts 1, mitochondrial of Thalassiosira pseudonana (Marine diatom).